The chain runs to 284 residues: L-ribulose-5-phosphate 3-epimerase UlaE (284 aa).

It belongs to the L-ribulose-5-phosphate 3-epimerase family.

The catalysed reaction is L-ribulose 5-phosphate = L-xylulose 5-phosphate. Its pathway is cofactor degradation; L-ascorbate degradation; D-xylulose 5-phosphate from L-ascorbate: step 3/4. Its function is as follows. Catalyzes the isomerization of L-xylulose-5-phosphate to L-ribulose-5-phosphate. Is involved in the anaerobic L-ascorbate utilization. The chain is L-ribulose-5-phosphate 3-epimerase UlaE from Escherichia coli O17:K52:H18 (strain UMN026 / ExPEC).